Here is a 391-residue protein sequence, read N- to C-terminus: 2,4,6-trihydroxybenzophenone synthase (391 aa).

Cys-165 is a catalytic residue.

The protein belongs to the thiolase-like superfamily. Chalcone/stilbene synthases family. As to quaternary structure, homodimer. As to expression, expressed in young fruit pericarp.

It carries out the reaction benzoyl-CoA + 3 malonyl-CoA + 2 H(+) = 2,4,6-trihydroxybenzophenone + 3 CO2 + 4 CoA. Its function is as follows. Type III polyketide synthase involved in the biosynthesis of benzophenones and xanthones. Produces mainly 2,4,6-trihydroxybenzophenone together with minor amounts of tetraketide lactone, triketide lactone and diketide lactone. The preferred substrate is benzoyl-CoA, but can also use acetyl-CoA, phenylacetyl-CoA, hexanoyl-CoA, cinnamoyl-CoA, p-coumaroyl-CoA and salicoyl-CoA. The polypeptide is 2,4,6-trihydroxybenzophenone synthase (BPS) (Garcinia mangostana (Mangosteen)).